The following is a 152-amino-acid chain: Protein-export protein SecB (152 aa).

Belongs to the SecB family. In terms of assembly, homotetramer, a dimer of dimers. One homotetramer interacts with 1 SecA dimer.

The protein resides in the cytoplasm. Its function is as follows. One of the proteins required for the normal export of preproteins out of the cell cytoplasm. It is a molecular chaperone that binds to a subset of precursor proteins, maintaining them in a translocation-competent state. It also specifically binds to its receptor SecA. The polypeptide is Protein-export protein SecB (Acinetobacter baumannii (strain AB307-0294)).